We begin with the raw amino-acid sequence, 211 residues long: Mediator-associated protein 2 (211 aa).

Residues 128-211 form a disordered region; the sequence is QQKLVGSVTN…KSKKKVKKEE (84 aa). A compositionally biased stretch (low complexity) spans 134–148; that stretch reads SVTNSSKKSSNLTQS. Phosphoserine is present on Ser-173. A compositionally biased stretch (low complexity) spans 189-198; it reads STSTVSGSSE. The span at 202–211 shows a compositional bias: basic residues; sequence KSKKKVKKEE.

In terms of assembly, associated with the Mediator complex.

The protein localises to the nucleus. In Arabidopsis thaliana (Mouse-ear cress), this protein is Mediator-associated protein 2.